Here is a 59-residue protein sequence, read N- to C-terminus: Large ribosomal subunit protein bL32 (59 aa).

A compositionally biased stretch (basic residues) spans 1–22; it reads MAVPKKKTSNSKRDSRRAHWNR. A disordered region spans residues 1–59; it reads MAVPKKKTSNSKRDSRRAHWNRKANLAAQRALSTGKSILTGRAKGFEYPTKDDDEDDDE.

Belongs to the bacterial ribosomal protein bL32 family.

The chain is Large ribosomal subunit protein bL32 from Acaryochloris marina (strain MBIC 11017).